We begin with the raw amino-acid sequence, 247 residues long: Serine protease 1 (247 aa).

The signal sequence occupies residues 1–15 (MNPLLILTFVAAALA). The propeptide at 16–23 (APFDDDDK) is activation peptide. A Peptidase S1 domain is found at 24-244 (IVGGYNCEEN…YVKWIKNTIA (221 aa)). 5 disulfide bridges follow: C30/C160, C48/C64, C139/C206, C171/C185, and C196/C220. The active-site Charge relay system is H63. E75, N77, V80, and E85 together coordinate Ca(2+). Catalysis depends on D107, which acts as the Charge relay system. Position 154 is a sulfotyrosine (Y154). The active-site Charge relay system is the S200.

The protein belongs to the peptidase S1 family. In terms of assembly, interacts with SERPINA1. Ca(2+) serves as cofactor. Occurs in a single-chain form and a two-chain form, produced by proteolytic cleavage after Arg-122. Post-translationally, sulfation at Tyr-154 increases selectivity towards basic versus apolar residues at the P2' position of inhibitors that bind in a substrate-like fashion. Although the increase in selectivity is relatively small, it may facilitate digestion of a broader range of dietary proteins.

The protein resides in the secreted. It is found in the extracellular space. It catalyses the reaction Preferential cleavage: Arg-|-Xaa, Lys-|-Xaa.. Its function is as follows. Has activity against the synthetic substrates Boc-Phe-Ser-Arg-Mec, Boc-Leu-Thr-Arg-Mec, Boc-Gln-Ala-Arg-Mec and Boc-Val-Pro-Arg-Mec. The single-chain form is more active than the two-chain form against all of these substrates. The protein is Serine protease 1 of Homo sapiens (Human).